The primary structure comprises 331 residues: UDP-GalNAc:beta-1,3-N-acetylgalactosaminyltransferase 1 (331 aa).

At 1-20 the chain is on the cytoplasmic side; that stretch reads MAPALPITLPSKMSLRSLKW. A helical; Signal-anchor for type II membrane protein membrane pass occupies residues 21–43; sequence SLLLLSLLSFLVMWYLSLPHYNV. The Lumenal segment spans residues 44 to 331; the sequence is IERVNWMYFY…VMLRNTTCHY (288 aa). N-linked (GlcNAc...) asparagine glycans are attached at residues Asn72, Asn154, Asn198, Asn212, and Asn326.

This sequence belongs to the glycosyltransferase 31 family. Mg(2+) serves as cofactor.

Its subcellular location is the golgi apparatus membrane. The enzyme catalyses a globoside Gb3Cer (d18:1(4E)) + UDP-N-acetyl-alpha-D-galactosamine = a globoside Gb4Cer (d18:1(4E)) + UDP + H(+). Its pathway is protein modification; protein glycosylation. Transfers N-acetylgalactosamine onto globotriaosylceramide. Plays a critical role in preimplantation stage embryonic development. The sequence is that of UDP-GalNAc:beta-1,3-N-acetylgalactosaminyltransferase 1 (B3GALNT1) from Sus scrofa (Pig).